An 84-amino-acid chain; its full sequence is Exodeoxyribonuclease 7 small subunit (84 aa).

Belongs to the XseB family. In terms of assembly, heterooligomer composed of large and small subunits.

Its subcellular location is the cytoplasm. The catalysed reaction is Exonucleolytic cleavage in either 5'- to 3'- or 3'- to 5'-direction to yield nucleoside 5'-phosphates.. Its function is as follows. Bidirectionally degrades single-stranded DNA into large acid-insoluble oligonucleotides, which are then degraded further into small acid-soluble oligonucleotides. In Haemophilus influenzae (strain ATCC 51907 / DSM 11121 / KW20 / Rd), this protein is Exodeoxyribonuclease 7 small subunit.